The sequence spans 806 residues: Xylosyltransferase sqv-6 (806 aa).

Topologically, residues 1–11 (MLFNGTTKYRD) are cytoplasmic. The helical; Signal-anchor for type II membrane protein transmembrane segment at 12–32 (YAIVISLFFLLNVYLLYNTAQ) threads the bilayer. At 33-806 (HTQVGNSKHI…GYDEDTQTLI (774 aa)) the chain is on the lumenal side. A disulfide bridge connects residues Cys57 and Cys85. N-linked (GlcNAc...) asparagine glycosylation is found at Asn89 and Asn169. 3 cysteine pairs are disulfide-bonded: Cys101–Cys445, Cys464–Cys478, and Cys466–Cys476. In terms of domain architecture, WSC spans 109 to 205 (IDQRIGCFLD…FNAVEIFRTG (97 aa)). UDP-alpha-D-xylose is bound by residues Asp264 and 293–295 (TIW). N-linked (GlcNAc...) asparagine glycosylation occurs at Asn325. 398 to 399 (DW) lines the UDP-alpha-D-xylose pocket. UDP-alpha-D-xylose contacts are provided by residues Ser479 and 505–506 (RK). Residues Asn614, Asn655, and Asn719 are each glycosylated (N-linked (GlcNAc...) asparagine). Cys772 and Cys778 are joined by a disulfide.

It belongs to the glycosyltransferase 14 family. XylT subfamily. A divalent metal cation is required as a cofactor.

Its subcellular location is the endoplasmic reticulum membrane. It is found in the golgi apparatus membrane. It catalyses the reaction UDP-alpha-D-xylose + L-seryl-[protein] = 3-O-(beta-D-xylosyl)-L-seryl-[protein] + UDP + H(+). Its pathway is glycan metabolism; chondroitin sulfate biosynthesis. It functions in the pathway glycan metabolism; heparan sulfate biosynthesis. Its function is as follows. Catalyzes the first step in biosynthesis of glycosaminoglycan. Transfers D-xylose from UDP-D-xylose to specific serine residues of the core protein. Required for vulval morphogenesis and zygotic cytokinesis, suggesting that glycosaminoglycans play a central role in vulval morphogenesis. The protein is Xylosyltransferase sqv-6 of Caenorhabditis elegans.